The primary structure comprises 381 residues: tRNA-cytidine(32) 2-sulfurtransferase (381 aa).

The short motif at 101 to 106 is the PP-loop motif element; sequence SGGKDS. [4Fe-4S] cluster-binding residues include cysteine 176, cysteine 179, and cysteine 267.

It belongs to the TtcA family. In terms of assembly, homodimer. Mg(2+) is required as a cofactor. Requires [4Fe-4S] cluster as cofactor.

The protein resides in the cytoplasm. The catalysed reaction is cytidine(32) in tRNA + S-sulfanyl-L-cysteinyl-[cysteine desulfurase] + AH2 + ATP = 2-thiocytidine(32) in tRNA + L-cysteinyl-[cysteine desulfurase] + A + AMP + diphosphate + H(+). It functions in the pathway tRNA modification. Catalyzes the ATP-dependent 2-thiolation of cytidine in position 32 of tRNA, to form 2-thiocytidine (s(2)C32). The sulfur atoms are provided by the cysteine/cysteine desulfurase (IscS) system. The chain is tRNA-cytidine(32) 2-sulfurtransferase from Psychrobacter cryohalolentis (strain ATCC BAA-1226 / DSM 17306 / VKM B-2378 / K5).